Reading from the N-terminus, the 247-residue chain is Myeloid leukemia factor 2 (247 aa).

The segment at 122-247 is disordered; sequence ETSEMRSAPG…PSRQSRRYDW (126 aa). Over residues 134–144 the composition is skewed to basic and acidic residues; it reads RETRRTVRDSD. Basic residues predominate over residues 154 to 169; it reads HHIRDRAHILQRSRNH. The span at 170–179 shows a compositional bias: basic and acidic residues; the sequence is RTGDQEERQD. The segment covering 182–192 has biased composition (acidic residues); the sequence is NLDESEAAAFD. Over residues 193–225 the composition is skewed to basic and acidic residues; the sequence is DEWRRETSRYRQQRPLEFRRHEASVGGGRRAEG. Serine 216, serine 237, and serine 239 each carry phosphoserine.

Belongs to the MLF family.

It is found in the cytoplasm. It localises to the nucleus. This chain is Myeloid leukemia factor 2 (Mlf2), found in Mus musculus (Mouse).